The chain runs to 759 residues: NADP-dependent malic enzyme (759 aa).

The interval 1-428 (MDEQLKQSAL…KLTEFVYKTN (428 aa)) is malic enzyme. Tyrosine 39 functions as the Proton donor in the catalytic mechanism. The Proton acceptor role is filled by lysine 94. A divalent metal cation contacts are provided by glutamate 136, aspartate 137, and aspartate 162. Residues 195–198 (AGAA), asparagine 288, and asparagine 320 contribute to the NADP(+) site. Residues 429–759 (LFMKPIFSQA…AVVEAQTTPL (331 aa)) are phosphate acetyltransferase.

The protein in the N-terminal section; belongs to the malic enzymes family. In the C-terminal section; belongs to the phosphate acetyltransferase and butyryltransferase family. It depends on Mg(2+) as a cofactor. The cofactor is Mn(2+).

The catalysed reaction is (S)-malate + NADP(+) = pyruvate + CO2 + NADPH. It catalyses the reaction oxaloacetate + H(+) = pyruvate + CO2. The polypeptide is NADP-dependent malic enzyme (maeB) (Salmonella typhimurium (strain LT2 / SGSC1412 / ATCC 700720)).